The sequence spans 1470 residues: Calmodulin-regulated spectrin-associated protein 2 (1470 aa).

One can recognise a Calponin-homology (CH) domain in the interval 222–335 (WKLVPARYRK…FMAELFWWFE (114 aa)). The interval 374 to 397 (SSSSSDFTSRYTRPQTHSSVSGGI) is disordered. Positions 380–390 (FTSRYTRPQTH) are enriched in polar residues. Phosphoserine is present on residues Ser402 and Ser404. A Phosphothreonine modification is found at Thr412. Phosphoserine occurs at positions 450, 581, 582, 594, and 656. 2 disordered regions span residues 580-622 (QSSP…EDSS) and 648-712 (ASNP…EGSE). Thr661 is subject to Phosphothreonine. Ser663 is subject to Phosphoserine. Over residues 663–682 (STKSQPGSSASSSSGVKMTS) the composition is skewed to low complexity. The span at 686–696 (QKFRKLNHTDG) shows a compositional bias: basic and acidic residues. Residues 739–776 (LLASEMVHLRMRLEEKRRAIEAQKKKMEAAFTKQRQKM) are a coiled coil. Positions 796 to 835 (REEAAGAEDEKVYTDRAKEKESQKMDGQRSKSLADIKESM) are enriched in basic and acidic residues. A disordered region spans residues 796-864 (REEAAGAEDE…QWNLTSPSEE (69 aa)). At Ser845 the chain carries Phosphoserine. Residues 870–909 (ELLEYTKSIEKLNSSLHFLQQEMQRLSLQQEMLMQMREQQ) are a coiled coil. Residues 905–1016 (MREQQSWVIS…IQTRSFVCFG (112 aa)) are MBD region. A phosphoserine mark is found at Ser914 and Ser919. Disordered stretches follow at residues 930–1059 (RQAG…PLES) and 1078–1099 (NEDQ…PTAP). Positions 935-946 (SSAAAPFSADSP) are enriched in low complexity. A compositionally biased stretch (polar residues) spans 952–971 (SPQSSTRKSASFSVKNQRTP). A phosphothreonine mark is found at Thr979, Thr984, and Thr986. Phosphoserine is present on residues Ser990 and Ser1001. Polar residues predominate over residues 1001-1011 (SPSQVPIQTRS). 2 stretches are compositionally biased toward basic and acidic residues: residues 1020-1037 (EPQK…EPSE) and 1044-1056 (SCDH…EVKP). Positions 1086 to 1098 (TDPPPKPVFPPTA) are enriched in pro residues. Ser1129 is subject to Phosphoserine. Residues 1147-1219 (KDDQKAENDM…REFIRQEYMR (73 aa)) are a coiled coil. Basic and acidic residues predominate over residues 1167–1233 (RLRREKETQL…KLMEDMDTVI (67 aa)). Residues 1167-1327 (RLRREKETQL…TTSSVASGTE (161 aa)) form a disordered region. A compositionally biased stretch (polar residues) spans 1268–1280 (SSLSLASLNTGDT). Phosphoserine occurs at positions 1294, 1300, and 1302. Polar residues predominate over residues 1315–1327 (NASTTSSVASGTE). The CKK domain occupies 1330-1464 (GPKLYKEPSA…QTKRPVTPKK (135 aa)).

This sequence belongs to the CAMSAP1 family. In terms of assembly, interacts with CAMSAP3. Interacts with KATNA1 and KATNB1; leading to regulate the length of CAMSAP2-decorated microtubule stretches. Interacts with a complex formed by AKAP9 and PDE4DIP; this interaction, which is PDE4DIP isoform-specific, recruits CAMSAP2 to the Golgi. Interacts with MAPRE1/EB1. Present in the soma, axon, and dendritic shaft of hippocampal neurons (at protein level).

The protein localises to the cytoplasm. It localises to the cytoskeleton. The protein resides in the golgi apparatus. It is found in the cilium basal body. Key microtubule-organizing protein that specifically binds the minus-end of non-centrosomal microtubules and regulates their dynamics and organization. Specifically recognizes growing microtubule minus-ends and autonomously decorates and stabilizes microtubule lattice formed by microtubule minus-end polymerization. Acts on free microtubule minus-ends that are not capped by microtubule-nucleating proteins or other factors and protects microtubule minus-ends from depolymerization. In addition, it also reduces the velocity of microtubule polymerization. Through the microtubule cytoskeleton, also regulates the organization of cellular organelles including the Golgi and the early endosomes. Essential for the tethering, but not for nucleation of non-centrosomal microtubules at the Golgi: together with Golgi-associated proteins AKAP9 and PDE4DIP, required to tether non-centrosomal minus-end microtubules to the Golgi, an important step for polarized cell movement. Also acts as a regulator of neuronal polarity and development: localizes to non-centrosomal microtubule minus-ends in neurons and stabilizes non-centrosomal microtubules, which is required for neuronal polarity, axon specification and dendritic branch formation. Through the microtubule cytoskeleton, regulates the autophagosome transport. In Rattus norvegicus (Rat), this protein is Calmodulin-regulated spectrin-associated protein 2.